A 160-amino-acid polypeptide reads, in one-letter code: Transcription elongation factor GreA (160 aa).

The stretch at 53–73 (AREEQGMVEARIRDIEGRLQN) forms a coiled coil.

Belongs to the GreA/GreB family.

In terms of biological role, necessary for efficient RNA polymerase transcription elongation past template-encoded arresting sites. The arresting sites in DNA have the property of trapping a certain fraction of elongating RNA polymerases that pass through, resulting in locked ternary complexes. Cleavage of the nascent transcript by cleavage factors such as GreA or GreB allows the resumption of elongation from the new 3'terminus. GreA releases sequences of 2 to 3 nucleotides. The sequence is that of Transcription elongation factor GreA from Pseudomonas putida (strain ATCC 47054 / DSM 6125 / CFBP 8728 / NCIMB 11950 / KT2440).